A 130-amino-acid polypeptide reads, in one-letter code: Small ribosomal subunit protein uS11 (130 aa).

Belongs to the universal ribosomal protein uS11 family. As to quaternary structure, part of the 30S ribosomal subunit. Interacts with proteins S7 and S18. Binds to IF-3.

Its function is as follows. Located on the platform of the 30S subunit, it bridges several disparate RNA helices of the 16S rRNA. Forms part of the Shine-Dalgarno cleft in the 70S ribosome. This is Small ribosomal subunit protein uS11 from Nitratiruptor sp. (strain SB155-2).